We begin with the raw amino-acid sequence, 552 residues long: Non-structural protein NS1 (552 aa).

It belongs to the orbivirus non-structural protein NS1 family.

In Bluetongue virus 1 (isolate Australia) (BTV 1), this protein is Non-structural protein NS1 (Segment-5).